The sequence spans 217 residues: Cytokinin riboside 5'-monophosphate phosphoribohydrolase LOG7 (217 aa).

Residues E79, 97–98, 114–120, and T126 each bind substrate; these read RK and GYGTLEE.

This sequence belongs to the LOG family. In terms of tissue distribution, expressed in roots and shoots. Detected in the epidermis of the root elongation zone, cotyledon and leaves, in trichomes and pollen.

The protein resides in the cytoplasm. The protein localises to the nucleus. The catalysed reaction is N(6)-(dimethylallyl)adenosine 5'-phosphate + H2O = N(6)-dimethylallyladenine + D-ribose 5-phosphate. It carries out the reaction 9-ribosyl-trans-zeatin 5'-phosphate + H2O = trans-zeatin + D-ribose 5-phosphate. In terms of biological role, cytokinin-activating enzyme working in the direct activation pathway. Phosphoribohydrolase that converts inactive cytokinin nucleotides to the biologically active free-base forms. This is Cytokinin riboside 5'-monophosphate phosphoribohydrolase LOG7 (LOG7) from Arabidopsis thaliana (Mouse-ear cress).